Consider the following 435-residue polypeptide: ATP-dependent protease ATPase subunit HslU (435 aa).

ATP-binding positions include Ile18, 60–65, Asp248, Glu313, and Arg385; that span reads GVGKTE.

The protein belongs to the ClpX chaperone family. HslU subfamily. A double ring-shaped homohexamer of HslV is capped on each side by a ring-shaped HslU homohexamer. The assembly of the HslU/HslV complex is dependent on binding of ATP.

Its subcellular location is the cytoplasm. ATPase subunit of a proteasome-like degradation complex; this subunit has chaperone activity. The binding of ATP and its subsequent hydrolysis by HslU are essential for unfolding of protein substrates subsequently hydrolyzed by HslV. HslU recognizes the N-terminal part of its protein substrates and unfolds these before they are guided to HslV for hydrolysis. The protein is ATP-dependent protease ATPase subunit HslU of Agrobacterium fabrum (strain C58 / ATCC 33970) (Agrobacterium tumefaciens (strain C58)).